The following is a 144-amino-acid chain: Maximins 3/H11 type 2 (144 aa).

An N-terminal signal peptide occupies residues 1–18 (MHFKYIVAVSFLIASAYA). 2 consecutive propeptides follow at residues 19-43 (RSVQ…REIR) and 73-122 (RTAE…KKEK). At Ile143 the chain carries Isoleucine amide.

This sequence belongs to the bombinin family. As to expression, expressed by the skin glands.

Its subcellular location is the secreted. Its function is as follows. Maximin-3 shows antibacterial activity against both Gram-positive and Gram-negative bacteria. It also shows antimicrobial activity against the fungus C.albicans, but not against A.flavus nor P.uticale. It has little hemolytic activity. It possess a significant cytotoxicity against tumor cell lines. It possess a significant anti-HIV activity. It shows high spermicidal activity. Functionally, maximin-H11 shows antimicrobial activity against bacteria and against the fungus C.albicans. Shows strong hemolytic activity. The chain is Maximins 3/H11 type 2 from Bombina maxima (Giant fire-bellied toad).